The sequence spans 227 residues: Cytochrome c oxidase subunit 2 (227 aa).

The Mitochondrial intermembrane portion of the chain corresponds to 1 to 14 (MAYPFQLGLQDATS). The chain crosses the membrane as a helical span at residues 15-45 (PIMEELLHFHDHTLMIVFLISSLVLYIITLM). The Mitochondrial matrix segment spans residues 46–59 (LTTKLTHTSTMDAQ). The chain crosses the membrane as a helical span at residues 60–87 (EVETVWTILPAIILILIALPSLRILYMM). Topologically, residues 88–227 (DEINNPSLTV…YFETWSALMV (140 aa)) are mitochondrial intermembrane. Residues H161, C196, E198, C200, H204, and M207 each contribute to the Cu cation site. Residue E198 participates in Mg(2+) binding. At Y218 the chain carries Phosphotyrosine.

It belongs to the cytochrome c oxidase subunit 2 family. Component of the cytochrome c oxidase (complex IV, CIV), a multisubunit enzyme composed of 14 subunits. The complex is composed of a catalytic core of 3 subunits MT-CO1, MT-CO2 and MT-CO3, encoded in the mitochondrial DNA, and 11 supernumerary subunits COX4I, COX5A, COX5B, COX6A, COX6B, COX6C, COX7A, COX7B, COX7C, COX8 and NDUFA4, which are encoded in the nuclear genome. The complex exists as a monomer or a dimer and forms supercomplexes (SCs) in the inner mitochondrial membrane with NADH-ubiquinone oxidoreductase (complex I, CI) and ubiquinol-cytochrome c oxidoreductase (cytochrome b-c1 complex, complex III, CIII), resulting in different assemblies (supercomplex SCI(1)III(2)IV(1) and megacomplex MCI(2)III(2)IV(2)). Found in a complex with TMEM177, COA6, COX18, COX20, SCO1 and SCO2. Interacts with TMEM177 in a COX20-dependent manner. Interacts with COX20. Interacts with COX16. Cu cation is required as a cofactor.

It localises to the mitochondrion inner membrane. It catalyses the reaction 4 Fe(II)-[cytochrome c] + O2 + 8 H(+)(in) = 4 Fe(III)-[cytochrome c] + 2 H2O + 4 H(+)(out). Component of the cytochrome c oxidase, the last enzyme in the mitochondrial electron transport chain which drives oxidative phosphorylation. The respiratory chain contains 3 multisubunit complexes succinate dehydrogenase (complex II, CII), ubiquinol-cytochrome c oxidoreductase (cytochrome b-c1 complex, complex III, CIII) and cytochrome c oxidase (complex IV, CIV), that cooperate to transfer electrons derived from NADH and succinate to molecular oxygen, creating an electrochemical gradient over the inner membrane that drives transmembrane transport and the ATP synthase. Cytochrome c oxidase is the component of the respiratory chain that catalyzes the reduction of oxygen to water. Electrons originating from reduced cytochrome c in the intermembrane space (IMS) are transferred via the dinuclear copper A center (CU(A)) of subunit 2 and heme A of subunit 1 to the active site in subunit 1, a binuclear center (BNC) formed by heme A3 and copper B (CU(B)). The BNC reduces molecular oxygen to 2 water molecules using 4 electrons from cytochrome c in the IMS and 4 protons from the mitochondrial matrix. In Vulpes macrotis (Kit fox), this protein is Cytochrome c oxidase subunit 2 (MT-CO2).